Consider the following 316-residue polypeptide: MTSKNPIQKALYLAFERAQWSVLRDAVPMTLSEQDLENLRGINEKVSLSEVTDIYLPLSRLLNLIVKAKQQRGLVLDEFLGQKPSSSPYIISLAGSVAVGKSTTARILQALLSQWPEHPKVDLVTTDGFLYPLADLKRKGLLQRKGFPESYDMKMLVEFISGVKSGQPHVNAPIYSHVTYDRIRGQHQTVSQPDILILEGLNVLQTGLDSPVDIRRPFVSDFVDFSIYVDAEEHLLKQWYQERFLQFRKGAFSDEKSYFHHYASLTDDEANTIAAKIWDTINGPNLQLNIQPTRERAHLILQKGQDHLMSHVLLRK.

ATP is bound at residue Gly95–Ser102.

It belongs to the prokaryotic pantothenate kinase family.

Its subcellular location is the cytoplasm. The catalysed reaction is (R)-pantothenate + ATP = (R)-4'-phosphopantothenate + ADP + H(+). The protein operates within cofactor biosynthesis; coenzyme A biosynthesis; CoA from (R)-pantothenate: step 1/5. The polypeptide is Pantothenate kinase (Shewanella oneidensis (strain ATCC 700550 / JCM 31522 / CIP 106686 / LMG 19005 / NCIMB 14063 / MR-1)).